Consider the following 317-residue polypeptide: MDKQTYWEIIIHPSDFLDQFTDFIIQKTSCAIEFFDILPTPSHFAIIYDDASWQSVLGFDILKAKKSKQPTQIVSRIASNEINIQDFLESLQHFALMLAQNTQDSVGFCYHIEEKFNYDWIKAYQDSIEPVQCGRFYIRPSWEQEVKESYDEIIINPAFAFGSGHHASTAMCLEFLSEMNIQGKTLLDVGCGSGILSIASCKLGAQVYACDTDENAIKECNKNILLNGVMLNALWQGSIADSPMGAPQKYDVIVANIVAFIVKVLHNDFRTKLAKNGVLILSGILDEYKFDIIKAFNDFDMLDTCCKDGWVALKLTL.

Residues Thr169, Gly190, Asp211, and Asn256 each contribute to the S-adenosyl-L-methionine site.

This sequence belongs to the methyltransferase superfamily. PrmA family.

The protein resides in the cytoplasm. The catalysed reaction is L-lysyl-[protein] + 3 S-adenosyl-L-methionine = N(6),N(6),N(6)-trimethyl-L-lysyl-[protein] + 3 S-adenosyl-L-homocysteine + 3 H(+). Methylates ribosomal protein L11. In Helicobacter hepaticus (strain ATCC 51449 / 3B1), this protein is Ribosomal protein L11 methyltransferase.